Reading from the N-terminus, the 1026-residue chain is Beta-galactosidase (1026 aa).

The active-site Proton donor is Glu458. Residue Glu546 is the Nucleophile of the active site.

It belongs to the glycosyl hydrolase 2 family.

The enzyme catalyses Hydrolysis of terminal non-reducing beta-D-galactose residues in beta-D-galactosides.. In Streptococcus thermophilus, this protein is Beta-galactosidase (lacZ).